Here is a 113-residue protein sequence, read N- to C-terminus: Large ribosomal subunit protein P1 (113 aa).

Residues 84 to 113 (APAAAAKKETKKEEVKKEESDDDMGMGLFD) form a disordered region. The span at 89–102 (AKKETKKEEVKKEE) shows a compositional bias: basic and acidic residues.

Belongs to the eukaryotic ribosomal protein P1/P2 family. In terms of assembly, P1 and P2 exist as dimers at the large ribosomal subunit.

In terms of biological role, plays an important role in the elongation step of protein synthesis. This is Large ribosomal subunit protein P1 (rplp1) from Dictyostelium discoideum (Social amoeba).